We begin with the raw amino-acid sequence, 276 residues long: Undecaprenyl-diphosphatase 1 (276 aa).

The next 7 membrane-spanning stretches (helical) occupy residues 4–24, 45–62, 83–103, 108–128, 187–207, 217–237, and 252–272; these read ILIC…FLPV, KTFD…VCWE, FTLN…LFEK, VLFS…IILW, VATE…TLYE, VDSL…AFVC, and VFAW…YSGW.

This sequence belongs to the UppP family.

The protein localises to the cell inner membrane. The catalysed reaction is di-trans,octa-cis-undecaprenyl diphosphate + H2O = di-trans,octa-cis-undecaprenyl phosphate + phosphate + H(+). Catalyzes the dephosphorylation of undecaprenyl diphosphate (UPP). Confers resistance to bacitracin. This is Undecaprenyl-diphosphatase 1 from Burkholderia ambifaria (strain ATCC BAA-244 / DSM 16087 / CCUG 44356 / LMG 19182 / AMMD) (Burkholderia cepacia (strain AMMD)).